The sequence spans 109 residues: Small ribosomal subunit protein uS17 (109 aa).

It belongs to the universal ribosomal protein uS17 family. In terms of assembly, part of the 30S ribosomal subunit.

Functionally, one of the primary rRNA binding proteins, it binds specifically to the 5'-end of 16S ribosomal RNA. The sequence is that of Small ribosomal subunit protein uS17 from Thermoplasma volcanium (strain ATCC 51530 / DSM 4299 / JCM 9571 / NBRC 15438 / GSS1).